The sequence spans 230 residues: MSNVVPTPVSPLFAQPFATRLERALQHLRIGRPVILMDDFDRENEADLIVAADKLTVPVMAQLIRDGSGIVCLCLPGETLDRLELPPMVDSNRSRYSTAFTVSIEAREGVTTGVSAVDRVTTIRAAIAPGARSGDVVSPGHVFPLRAQPGGVLTRRGHTEGSVDLAALAGLRPAGVLCELMNADGTMMRGASLERYAAKEGLVALAIDELAAHLQARGATGAPAELAVAA.

Residues 42 to 43 (RE), aspartate 47, 155 to 159 (RRGHT), and glutamate 179 each bind D-ribulose 5-phosphate. Glutamate 43 lines the Mg(2+) pocket. Histidine 158 serves as a coordination point for Mg(2+).

This sequence belongs to the DHBP synthase family. In terms of assembly, homodimer. It depends on Mg(2+) as a cofactor. The cofactor is Mn(2+).

It carries out the reaction D-ribulose 5-phosphate = (2S)-2-hydroxy-3-oxobutyl phosphate + formate + H(+). It functions in the pathway cofactor biosynthesis; riboflavin biosynthesis; 2-hydroxy-3-oxobutyl phosphate from D-ribulose 5-phosphate: step 1/1. Catalyzes the conversion of D-ribulose 5-phosphate to formate and 3,4-dihydroxy-2-butanone 4-phosphate. In Bordetella bronchiseptica (strain ATCC BAA-588 / NCTC 13252 / RB50) (Alcaligenes bronchisepticus), this protein is 3,4-dihydroxy-2-butanone 4-phosphate synthase.